Reading from the N-terminus, the 197-residue chain is Recombination protein RecR (197 aa).

The C4-type zinc finger occupies Cys56–Cys71. The 96-residue stretch at Glu79 to Pro174 folds into the Toprim domain.

Belongs to the RecR family.

May play a role in DNA repair. It seems to be involved in an RecBC-independent recombinational process of DNA repair. It may act with RecF and RecO. In Gloeobacter violaceus (strain ATCC 29082 / PCC 7421), this protein is Recombination protein RecR.